The chain runs to 59 residues: Mitochondrial sheath formation-associated protein (59 aa).

At 1 to 6 the chain is on the mitochondrial intermembrane side; sequence MIVLGW. 2 consecutive transmembrane segments (helical) span residues 2-22 and 7-23; these read IVLGWMFFVGLVCYMGTFPEL and MFFVGLVCYMGTFPELM. Over 24–40 the chain is Cytoplasmic; it reads PPTLKWQERWPVQESKT.

Interacts with VDAC3.

The protein localises to the mitochondrion outer membrane. Its function is as follows. Regulates sperm development. May be involved in mitochondrial sheath formation. In Homo sapiens (Human), this protein is Mitochondrial sheath formation-associated protein.